The following is a 239-amino-acid chain: MKNDVISPEFDENGRPLRRIRSFVRRQGRLTKGQEHALENYWPVMGVEFSEDMLDFPALFGREAPVTLEIGFGMGASLVAMAKDRPEQDFLGIEVHSPGVGACLASAHEEGLSNLRVMCHDAVEVLHKMIPDNSLRMVQLFFPDPWHKARHNKRRIIQVPFAELVKSKLQLGGIFHMATDWEPYAEHMLEVMSSIDGYKNLSESNDYVPRPASRPVTKFEQRGHRLGHGVWDLMFERVK.

4 residues coordinate S-adenosyl-L-methionine: glutamate 69, glutamate 94, aspartate 121, and aspartate 144. Aspartate 144 is an active-site residue. Lysine 148 provides a ligand contact to substrate. The tract at residues 150–155 (RHNKRR) is interaction with RNA. Substrate is bound by residues aspartate 180 and 217–220 (TKFE).

It belongs to the class I-like SAM-binding methyltransferase superfamily. TrmB family. Monomer.

It catalyses the reaction guanosine(46) in tRNA + S-adenosyl-L-methionine = N(7)-methylguanosine(46) in tRNA + S-adenosyl-L-homocysteine. It functions in the pathway tRNA modification; N(7)-methylguanine-tRNA biosynthesis. In terms of biological role, catalyzes the formation of N(7)-methylguanine at position 46 (m7G46) in tRNA. The protein is tRNA (guanine-N(7)-)-methyltransferase of Escherichia coli O6:K15:H31 (strain 536 / UPEC).